The chain runs to 440 residues: Protein translocase subunit SecY (440 aa).

A run of 10 helical transmembrane segments spans residues 17-37 (IFFT…PSPG), 74-94 (IFAI…LLTV), 116-135 (YTRY…IVAL), 155-175 (FFDL…VMWM), 178-198 (LITE…GIAT), 213-233 (GVVF…VVFV), 270-290 (VIPV…TQIV), 316-336 (WQYI…YVSV), 374-394 (LLFV…IMLD), and 403-423 (GATP…LTTV).

This sequence belongs to the SecY/SEC61-alpha family. In terms of assembly, component of the Sec protein translocase complex. Heterotrimer consisting of SecY, SecE and SecG subunits. The heterotrimers can form oligomers, although 1 heterotrimer is thought to be able to translocate proteins. Interacts with the ribosome. Interacts with SecDF, and other proteins may be involved. Interacts with SecA.

It localises to the cell membrane. In terms of biological role, the central subunit of the protein translocation channel SecYEG. Consists of two halves formed by TMs 1-5 and 6-10. These two domains form a lateral gate at the front which open onto the bilayer between TMs 2 and 7, and are clamped together by SecE at the back. The channel is closed by both a pore ring composed of hydrophobic SecY resides and a short helix (helix 2A) on the extracellular side of the membrane which forms a plug. The plug probably moves laterally to allow the channel to open. The ring and the pore may move independently. The chain is Protein translocase subunit SecY from Corynebacterium glutamicum (strain ATCC 13032 / DSM 20300 / JCM 1318 / BCRC 11384 / CCUG 27702 / LMG 3730 / NBRC 12168 / NCIMB 10025 / NRRL B-2784 / 534).